Here is a 178-residue protein sequence, read N- to C-terminus: ATP synthase subunit b (178 aa).

The chain crosses the membrane as a helical span at residues 11 to 31 (IIPEPVEIVVGLVAFLLLLFV).

Belongs to the ATPase B chain family. In terms of assembly, F-type ATPases have 2 components, F(1) - the catalytic core - and F(0) - the membrane proton channel. F(1) has five subunits: alpha(3), beta(3), gamma(1), delta(1), epsilon(1). F(0) has three main subunits: a(1), b(2) and c(10-14). The alpha and beta chains form an alternating ring which encloses part of the gamma chain. F(1) is attached to F(0) by a central stalk formed by the gamma and epsilon chains, while a peripheral stalk is formed by the delta and b chains.

It is found in the cell membrane. F(1)F(0) ATP synthase produces ATP from ADP in the presence of a proton or sodium gradient. F-type ATPases consist of two structural domains, F(1) containing the extramembraneous catalytic core and F(0) containing the membrane proton channel, linked together by a central stalk and a peripheral stalk. During catalysis, ATP synthesis in the catalytic domain of F(1) is coupled via a rotary mechanism of the central stalk subunits to proton translocation. Functionally, component of the F(0) channel, it forms part of the peripheral stalk, linking F(1) to F(0). The polypeptide is ATP synthase subunit b (Saccharopolyspora erythraea (strain ATCC 11635 / DSM 40517 / JCM 4748 / NBRC 13426 / NCIMB 8594 / NRRL 2338)).